The sequence spans 309 residues: Aspartate carbamoyltransferase catalytic subunit (309 aa).

2 residues coordinate carbamoyl phosphate: Arg-55 and Thr-56. Position 85 (Lys-85) interacts with L-aspartate. Carbamoyl phosphate is bound by residues Arg-106, His-135, and Gln-138. Arg-168 and Arg-230 together coordinate L-aspartate. Positions 268 and 269 each coordinate carbamoyl phosphate.

The protein belongs to the aspartate/ornithine carbamoyltransferase superfamily. ATCase family. In terms of assembly, heterododecamer (2C3:3R2) of six catalytic PyrB chains organized as two trimers (C3), and six regulatory PyrI chains organized as three dimers (R2).

It carries out the reaction carbamoyl phosphate + L-aspartate = N-carbamoyl-L-aspartate + phosphate + H(+). Its pathway is pyrimidine metabolism; UMP biosynthesis via de novo pathway; (S)-dihydroorotate from bicarbonate: step 2/3. In terms of biological role, catalyzes the condensation of carbamoyl phosphate and aspartate to form carbamoyl aspartate and inorganic phosphate, the committed step in the de novo pyrimidine nucleotide biosynthesis pathway. In Vibrio vulnificus (strain CMCP6), this protein is Aspartate carbamoyltransferase catalytic subunit.